Reading from the N-terminus, the 229-residue chain is 2-C-methyl-D-erythritol 4-phosphate cytidylyltransferase (229 aa).

Belongs to the IspD/TarI cytidylyltransferase family. IspD subfamily.

The enzyme catalyses 2-C-methyl-D-erythritol 4-phosphate + CTP + H(+) = 4-CDP-2-C-methyl-D-erythritol + diphosphate. Its pathway is isoprenoid biosynthesis; isopentenyl diphosphate biosynthesis via DXP pathway; isopentenyl diphosphate from 1-deoxy-D-xylulose 5-phosphate: step 2/6. Catalyzes the formation of 4-diphosphocytidyl-2-C-methyl-D-erythritol from CTP and 2-C-methyl-D-erythritol 4-phosphate (MEP). This chain is 2-C-methyl-D-erythritol 4-phosphate cytidylyltransferase, found in Neisseria meningitidis serogroup B (strain ATCC BAA-335 / MC58).